Here is a 330-residue protein sequence, read N- to C-terminus: Mas-related G-protein coupled receptor member X2 (330 aa).

Residues 1–33 (MDPTTLVWGTESTTMNGNDQALPLLCGKETLIL) lie on the Extracellular side of the membrane. The helical transmembrane segment at 34–54 (VVLILFIALVGLVGNAFVLWL) threads the bilayer. Residues 55 to 63 (LGFRMRRNA) are Cytoplasmic-facing. A helical membrane pass occupies residues 64–84 (FSVYVLSLAGADFLFLCFPMI). Residues 85–96 (NCLAYLINFFHS) lie on the Extracellular side of the membrane. Residues 97–117 (ISINFPSFFTTVMTCAYLAGL) form a helical membrane-spanning segment. At 118-144 (SMLSAISTERCLSVLWPIWYRSRRPRH) the chain is on the cytoplasmic side. The helical transmembrane segment at 145 to 165 (LSAVMCVLLWALSLLLSILEG) threads the bilayer. The Extracellular segment spans residues 166-184 (KFCGFLFSDGDSGWCQTFD). The helical transmembrane segment at 185–205 (FITAAWLMFLFVVLCGSSLAL) threads the bilayer. Residues 206–228 (LVRILCGSRGLPLTRLYLTILLT) are Cytoplasmic-facing. The chain crosses the membrane as a helical span at residues 229 to 249 (VLIFLLCGLPFGIQWFLILWI). The Extracellular portion of the chain corresponds to 250 to 264 (WKNSDVLFCHIHPVS). The chain crosses the membrane as a helical span at residues 265-285 (VVLSSFNSSANPIIYFFVGSF). Residues 286–330 (RKQWRLRQPVLKLALQRALQDTAEVDHSEGCFSQGTLEMSGSSLV) lie on the Cytoplasmic side of the membrane.

Belongs to the G-protein coupled receptor 1 family. Mas subfamily.

The protein resides in the cell membrane. In terms of biological role, mast cell-specific receptor for basic secretagogues, i.e. cationic amphiphilic drugs, as well as endo- or exogenous peptides, consisting of a basic head group and a hydrophobic core. Recognizes and binds small molecules containing a cyclized tetrahydroisoquinoline (THIQ), such as non-steroidal neuromuscular blocking drugs (NMBDs), including tubocurarine and atracurium. In response to these compounds, mediates pseudo-allergic reactions characterized by histamine release, inflammation and airway contraction. This chain is Mas-related G-protein coupled receptor member X2 (MRGPRX2), found in Trachypithecus francoisi (Francois' leaf monkey).